The chain runs to 197 residues: Nucleoside triphosphate pyrophosphatase (197 aa).

Aspartate 72 (proton acceptor) is an active-site residue.

Belongs to the Maf family. Requires a divalent metal cation as cofactor.

It is found in the cytoplasm. It catalyses the reaction a ribonucleoside 5'-triphosphate + H2O = a ribonucleoside 5'-phosphate + diphosphate + H(+). The catalysed reaction is a 2'-deoxyribonucleoside 5'-triphosphate + H2O = a 2'-deoxyribonucleoside 5'-phosphate + diphosphate + H(+). In terms of biological role, nucleoside triphosphate pyrophosphatase. May have a dual role in cell division arrest and in preventing the incorporation of modified nucleotides into cellular nucleic acids. The polypeptide is Nucleoside triphosphate pyrophosphatase (Corynebacterium glutamicum (strain R)).